Here is a 244-residue protein sequence, read N- to C-terminus: tRNA (guanine-N(7)-)-methyltransferase (244 aa).

Polar residues predominate over residues 1 to 10 (MSDTPQSPAQ). Residues 1-20 (MSDTPQSPAQDSLAEHDEAR) are disordered. Glu-74, Glu-99, Asp-126, and Asp-149 together coordinate S-adenosyl-L-methionine. Residue Asp-149 is part of the active site. Residues Lys-153, Asp-185, and 222–225 (TKFE) each bind substrate.

This sequence belongs to the class I-like SAM-binding methyltransferase superfamily. TrmB family.

The catalysed reaction is guanosine(46) in tRNA + S-adenosyl-L-methionine = N(7)-methylguanosine(46) in tRNA + S-adenosyl-L-homocysteine. The protein operates within tRNA modification; N(7)-methylguanine-tRNA biosynthesis. Its function is as follows. Catalyzes the formation of N(7)-methylguanine at position 46 (m7G46) in tRNA. This Pseudomonas aeruginosa (strain ATCC 15692 / DSM 22644 / CIP 104116 / JCM 14847 / LMG 12228 / 1C / PRS 101 / PAO1) protein is tRNA (guanine-N(7)-)-methyltransferase.